The following is a 343-amino-acid chain: Protein RecA (343 aa).

66–73 (GPESSGKT) lines the ATP pocket.

It belongs to the RecA family.

The protein resides in the cytoplasm. Its function is as follows. Can catalyze the hydrolysis of ATP in the presence of single-stranded DNA, the ATP-dependent uptake of single-stranded DNA by duplex DNA, and the ATP-dependent hybridization of homologous single-stranded DNAs. It interacts with LexA causing its activation and leading to its autocatalytic cleavage. The protein is Protein RecA of Nitrosomonas eutropha (strain DSM 101675 / C91 / Nm57).